We begin with the raw amino-acid sequence, 313 residues long: tRNA dimethylallyltransferase (313 aa).

Position 17-24 (17-24 (GPTASGKT)) interacts with ATP. 19 to 24 (TASGKT) is a substrate binding site. Interaction with substrate tRNA regions lie at residues 42 to 45 (DSAL), 166 to 170 (QRLSR), and 247 to 252 (RCVGYR).

The protein belongs to the IPP transferase family. In terms of assembly, monomer. Mg(2+) is required as a cofactor.

The catalysed reaction is adenosine(37) in tRNA + dimethylallyl diphosphate = N(6)-dimethylallyladenosine(37) in tRNA + diphosphate. In terms of biological role, catalyzes the transfer of a dimethylallyl group onto the adenine at position 37 in tRNAs that read codons beginning with uridine, leading to the formation of N6-(dimethylallyl)adenosine (i(6)A). This chain is tRNA dimethylallyltransferase, found in Serratia proteamaculans (strain 568).